Here is a 512-residue protein sequence, read N- to C-terminus: UDP-N-acetylmuramate--L-alanine ligase (512 aa).

132–138 (GAHGKTT) contributes to the ATP binding site.

This sequence belongs to the MurCDEF family.

It localises to the cytoplasm. The catalysed reaction is UDP-N-acetyl-alpha-D-muramate + L-alanine + ATP = UDP-N-acetyl-alpha-D-muramoyl-L-alanine + ADP + phosphate + H(+). It participates in cell wall biogenesis; peptidoglycan biosynthesis. Its function is as follows. Cell wall formation. This chain is UDP-N-acetylmuramate--L-alanine ligase, found in Bifidobacterium longum (strain NCC 2705).